Consider the following 557-residue polypeptide: MYDHFNSPSIDILYDYGPFLKKCEMTGGIGSYSAGTPTPRVAIVGAGISGLVAATELLRAGVKDVVLYESRDRIGGRVWSQVFDQTRPRYIAEMGAMRFPPSATGLFHYLKKFGISTSTTFPDPGVVDTELHYRGKRYHWPAGKKPPELFRRVYEGWQSLLSEGYLLEGGSLVAPLDITAMLKSGRLEEAAIAWQGWLNVFRDCSFYNAIVCIFTGRHPPGGDRWARPEDFELFGSLGIGSGGFLPVFQAGFTEILRMVINGYQSDQRLIPDGISSLAARLADQSFDGKALRDRVCFSRVGRISREAEKIIIQTEAGEQRVFDRVIVTSSNRAMQMIHCLTDSESFLSRDVARAVRETHLTGSSKLFILTRTKFWIKNKLPTTIQSDGLVRGVYCLDYQPDEPEGHGVVLLSYTWEDDAQKMLAMPDKKTRCQVLVDDLAAIHPTFASYLLPVDGDYERYVLHHDWLTDPHSAGAFKLNYPGEDVYSQRLFFQPMTANSPNKDTGLYLAGCSCSFAGGWIEGAVQTALNSACAVLRSTGGQLSKGNPLDCINASYRY.

5 residues coordinate FMN: Ser49, Glu69, Arg71, Arg77, and Arg98. Substrate is bound at residue Arg98.

The protein belongs to the tryptophan 2-monooxygenase family. As to quaternary structure, monomer. Requires FMN as cofactor.

It catalyses the reaction L-tryptophan + O2 = indole-3-acetamide + CO2 + H2O. It functions in the pathway plant hormone metabolism; auxin biosynthesis. This chain is Tryptophan 2-monooxygenase (iaaM), found in Pseudomonas savastanoi (Pseudomonas syringae pv. savastanoi).